A 314-amino-acid polypeptide reads, in one-letter code: tRNA-cytidine(32) 2-sulfurtransferase (314 aa).

Positions 39-44 (SGGKDS) match the PP-loop motif motif. [4Fe-4S] cluster-binding residues include Cys114, Cys117, and Cys205.

It belongs to the TtcA family. In terms of assembly, homodimer. Mg(2+) is required as a cofactor. The cofactor is [4Fe-4S] cluster.

Its subcellular location is the cytoplasm. It carries out the reaction cytidine(32) in tRNA + S-sulfanyl-L-cysteinyl-[cysteine desulfurase] + AH2 + ATP = 2-thiocytidine(32) in tRNA + L-cysteinyl-[cysteine desulfurase] + A + AMP + diphosphate + H(+). It participates in tRNA modification. Functionally, catalyzes the ATP-dependent 2-thiolation of cytidine in position 32 of tRNA, to form 2-thiocytidine (s(2)C32). The sulfur atoms are provided by the cysteine/cysteine desulfurase (IscS) system. The chain is tRNA-cytidine(32) 2-sulfurtransferase from Cupriavidus necator (strain ATCC 17699 / DSM 428 / KCTC 22496 / NCIMB 10442 / H16 / Stanier 337) (Ralstonia eutropha).